The primary structure comprises 249 residues: MPNDVTPGHPAGDDAKYARVMLKISGEALMGDQGFGLHPPTVERIAREIQSVHDMGVEICLVIGGGNIFRGLQGSAQGMERTTADYMGMLATVMNALAMQGALESLGVYTRVISAITMNEVAEPYIRRRAIRHLEKKRVCIFAAGTGNPYFTTDTAATLRASEMDCEAIFKGTKVDGVYDKDPAKHADAKRYETVTYDEVLAQHLGVMDASAIALARENKLPIMVFSLDEPGGFRSILDGTGTYTKVVE.

Lys23–Gly26 is an ATP binding site. Residues Gly31–Gly36 are involved in allosteric activation by GTP. UMP is bound at residue Gly65. ATP is bound by residues Gly66 and Arg70. UMP contacts are provided by residues Asp85 and Thr146–Thr153. 3 residues coordinate ATP: Thr173, Tyr179, and Asp182.

The protein belongs to the UMP kinase family. Homohexamer.

The protein resides in the cytoplasm. It carries out the reaction UMP + ATP = UDP + ADP. The protein operates within pyrimidine metabolism; CTP biosynthesis via de novo pathway; UDP from UMP (UMPK route): step 1/1. Allosterically activated by GTP. Inhibited by UTP. Functionally, catalyzes the reversible phosphorylation of UMP to UDP. This Jannaschia sp. (strain CCS1) protein is Uridylate kinase.